The chain runs to 573 residues: Eukaryotic translation initiation factor 3 subunit D (573 aa).

A disordered region spans residues 111-162 (VFTRGGRGQRGARGTERGGRAQLSRGRGGQYGGGYDRGGRSAAGGRGGRRFG). Positions 136–156 (GRGGQYGGGYDRGGRSAAGGR) are enriched in gly residues. Residues 301 to 315 (ALDMVTVNENAVDAP) form an RNA gate region. The disordered stretch occupies residues 552 to 573 (PAGGLDEEEDNGDLGQEEDDEE). Positions 556 to 573 (LDEEEDNGDLGQEEDDEE) are enriched in acidic residues.

Belongs to the eIF-3 subunit D family. Component of the eukaryotic translation initiation factor 3 (eIF-3) complex.

Its subcellular location is the cytoplasm. Functionally, mRNA cap-binding component of the eukaryotic translation initiation factor 3 (eIF-3) complex, which is involved in protein synthesis of a specialized repertoire of mRNAs and, together with other initiation factors, stimulates binding of mRNA and methionyl-tRNAi to the 40S ribosome. The eIF-3 complex specifically targets and initiates translation of a subset of mRNAs involved in cell proliferation. In the eIF-3 complex, eif3d specifically recognizes and binds the 7-methylguanosine cap of a subset of mRNAs. This Pyricularia oryzae (strain 70-15 / ATCC MYA-4617 / FGSC 8958) (Rice blast fungus) protein is Eukaryotic translation initiation factor 3 subunit D.